Here is a 123-residue protein sequence, read N- to C-terminus: Plasminogen (123 aa).

The region spanning 40 to 118 (DCYHGNGQSY…RWEFCNLKKC (79 aa)) is the Kringle domain. 3 cysteine pairs are disulfide-bonded: Cys-41–Cys-118, Cys-62–Cys-101, and Cys-90–Cys-113.

It belongs to the peptidase S1 family. Plasminogen subfamily. Interacts with CSPG4 and AMOT. Interacts (via the Kringle domains) with HRG; the interaction tethers PLG to the cell surface and enhances its activation. Interacts (via Kringle 4 domain) with ADA; the interaction stimulates PLG activation when in complex with DPP4. Angiostatin: Interacts with ATP5F1A; the interaction inhibits most of the angiogenic effects of angiostatin.

The protein resides in the secreted. The catalysed reaction is Preferential cleavage: Lys-|-Xaa &gt; Arg-|-Xaa, higher selectivity than trypsin. Converts fibrin into soluble products.. Converted into plasmin by plasminogen activators, both plasminogen and its activator being bound to fibrin. Cannot be activated with streptokinase. Its function is as follows. Plasmin dissolves the fibrin of blood clots and acts as a proteolytic factor in a variety of other processes including embryonic development, tissue remodeling, tumor invasion, and inflammation. In ovulation, weakens the walls of the Graafian follicle. It activates the urokinase-type plasminogen activator, collagenases and several complement zymogens, such as C1, C4 and C5. Cleavage of fibronectin and laminin leads to cell detachment and apoptosis. Also cleaves fibrin, thrombospondin and von Willebrand factor. Its role in tissue remodeling and tumor invasion may be modulated by CSPG4. Binds to cells. The polypeptide is Plasminogen (PLG) (Capra hircus (Goat)).